The chain runs to 437 residues: Triacylglycerol lipase (437 aa).

The PE domain maps to 1-100 (MVSYVVALPE…AELANASLLQ (100 aa)). Residues 101–206 (SEFASGIGNG…GNSPPPLLNS (106 aa)) form a linker region. The lipase stretch occupies residues 207 to 437 (LLGQTVQYTT…QINQQLGIAA (231 aa)). An Involved in the stabilization of the negatively charged intermediate by the formation of the oxyanion hole motif is present at residues 239–241 (HGG). Catalysis depends on residues serine 309, aspartate 383, and histidine 413.

This sequence in the N-terminal section; belongs to the mycobacterial PE family. PGRS subfamily. It in the C-terminal section; belongs to the 'GDXG' lipolytic enzyme family. As to quaternary structure, forms aggregates via its PE domain. Post-translationally, upon export, the PE domain is removed by proteolytic cleavage. Cleavage occurs at the cell surface and is not required for secretion. Cleaved after Gly-149 by the aspartic protease PecA. May also be cleaved before Leu-98 and after Ala-136.

The protein resides in the cytoplasm. It is found in the secreted. Its subcellular location is the cell wall. It localises to the cell surface. The enzyme catalyses a triacylglycerol + H2O = a diacylglycerol + a fatty acid + H(+). It carries out the reaction 1,2,3-tri-(9Z-octadecenoyl)-glycerol + H2O = di-(9Z)-octadecenoylglycerol + (9Z)-octadecenoate + H(+). It catalyses the reaction an acetyl ester + H2O = an aliphatic alcohol + acetate + H(+). The catalysed reaction is a butanoate ester + H2O = an aliphatic alcohol + butanoate + H(+). The enzyme catalyses a hexanoate ester + H2O = an aliphatic alcohol + hexanoate + H(+). It carries out the reaction an octanoate ester + H2O = an aliphatic alcohol + octanoate + H(+). It catalyses the reaction a dodecanoate ester + H2O = an aliphatic alcohol + dodecanoate + H(+). The catalysed reaction is a tetradecanoate ester + H2O = an aliphatic alcohol + tetradecanoate + H(+). The enzyme catalyses hexadecanoate ester + H2O = an aliphatic alcohol + hexadecanoate + H(+). It carries out the reaction octadecanoate ester + H2O = an aliphatic alcohol + octadecanoate + H(+). It catalyses the reaction 1-butyrylglycerol + H2O = butanoate + glycerol + H(+). The catalysed reaction is 1,2,3-tributanoylglycerol + H2O = dibutanoylglycerol + butanoate + H(+). Its activity is regulated as follows. PE domain down-regulates lipase activity. With respect to regulation, cleavage by PecA does not affect surface localization and lipase activity. Inhibited by diethyl-p-nitrophenyl phosphate (E-600) at 0.5 uM, by phenylmethanesulfonyl fluoride at 5 mM and by polyethylene glycol sorbitan monolaurate (Tween 20). Also inhibited by CaCl(2), CoCl(2), MnCl(2), ZnCl(2) and MgCl(2). Inhibited by several hydrazides compounds. Stimulated slightly by SDS at concentrations up to 2 mM, above which the activity is severely inhibited. Its function is as follows. Catalyzes the hydrolysis of both intracellular and extracellular triacylglycerol (TAG). In vitro, can also hydrolyze p-nitrophenyl (pNP) esters with various chain lengths, including pNP-acetate (C2), pNP-butyrate (C4), pNP-caproate (C6), pNP-caprylate (C8), pNP-laurate (C12), pNP-myristate (C14), pNP-palmitate (C16) and pNP-stearate (C18). Also hydrolyzes monobutyrin, tributyrin and trioctanoin. Overexpression results in increase of virulence characterized by reduced survival of infected mouse and increased burden of bacilli in the lungs. Hydrolyzes internal or host-derived TAG depending on its localization. Functionally, hydrolyzes TAG that accumulates within mycobacterial intracytosolic lipid inclusions (ILI). Probably responsible for the utilization of stored long-chain TAG during the dormancy and reactivation stages of the pathogen. Hydrolyzes host-derived TAG. This Mycobacterium tuberculosis (strain ATCC 25618 / H37Rv) protein is Triacylglycerol lipase.